A 349-amino-acid polypeptide reads, in one-letter code: MNSYYTEENHGPFELINIGPLPLEEGRCMPECLLAVAVHGALNADKSNAILVPTWYSGTSKAMEQIYIGEGRALDPSKYCIIVVNQIGNGLSSSASNTGGSLAGPGFANVRIGDDVSAQHTLLTEYFGIESLALVVGGSMGAQQTYEWAVRYPDFVKRAAAIAGTARNSEHDFLFTEILIEAITTDPAFQAGLYRSSSAVAAGLERHAKLWTLMGWSPEFFRTGRHKALGFESMQMFVDGFMKRYFAPMDPNNLLTMAWKWQRGDVSRHTGGDLAKALGRIKAKTYVMPISHDQFFTVDDCLSEQKMIPNSEFRPLRSIDGHLGLFGTDAQMLDQLDAHLAELLSSPAY.

One can recognise an AB hydrolase-1 domain in the interval 67-300; the sequence is YIGEGRALDP…SHDQFFTVDD (234 aa). Residue Ser-139 is the Nucleophile of the active site. Residues Asp-293 and His-322 contribute to the active site.

The protein belongs to the AB hydrolase superfamily. Acetyl esterase family. In terms of assembly, homodimer.

It catalyses the reaction ethyl acetate + H2O = ethanol + acetate + H(+). In terms of biological role, esterase that catalyzes the hydrolysis of ethyl acetate. Involved in the degradation of short chain methyl ketones (MEK) such as 2-butanone and 2-hexanone. In vitro, can also hydrolyze vinyl acetate, 4-nitrophenyl acetate, methyl acetate, propyl acetate, benzyl acetate and methyl propionate. The highest activities are obtained with acetic acid esters, but the alcohol group also plays an important role, as compounds with two carbon atoms in the alcohol moiety, i.e., vinyl and ethyl acetate, are by far the preferred substrates. This Pseudomonas veronii protein is Ethyl acetate hydrolase.